A 261-amino-acid chain; its full sequence is Methionine aminopeptidase (261 aa).

Residue histidine 78 coordinates substrate. Residues aspartate 96, aspartate 107, and histidine 170 each contribute to the a divalent metal cation site. Histidine 177 provides a ligand contact to substrate. The a divalent metal cation site is built by glutamate 202 and glutamate 233.

The protein belongs to the peptidase M24A family. Methionine aminopeptidase type 1 subfamily. In terms of assembly, monomer. Requires Co(2+) as cofactor. Zn(2+) is required as a cofactor. It depends on Mn(2+) as a cofactor. The cofactor is Fe(2+).

The enzyme catalyses Release of N-terminal amino acids, preferentially methionine, from peptides and arylamides.. Removes the N-terminal methionine from nascent proteins. The N-terminal methionine is often cleaved when the second residue in the primary sequence is small and uncharged (Met-Ala-, Cys, Gly, Pro, Ser, Thr, or Val). Requires deformylation of the N(alpha)-formylated initiator methionine before it can be hydrolyzed. This chain is Methionine aminopeptidase, found in Buchnera aphidicola subsp. Schizaphis graminum (strain Sg).